The primary structure comprises 119 residues: Large ribosomal subunit protein bL20 (119 aa).

Belongs to the bacterial ribosomal protein bL20 family.

In terms of biological role, binds directly to 23S ribosomal RNA and is necessary for the in vitro assembly process of the 50S ribosomal subunit. It is not involved in the protein synthesizing functions of that subunit. This chain is Large ribosomal subunit protein bL20, found in Bordetella avium (strain 197N).